The chain runs to 213 residues: A-type ATP synthase subunit D (213 aa).

It belongs to the V-ATPase D subunit family. Has multiple subunits with at least A(3), B(3), C, D, E, F, H, I and proteolipid K(x).

Its subcellular location is the cell membrane. Its function is as follows. Component of the A-type ATP synthase that produces ATP from ADP in the presence of a proton gradient across the membrane. The polypeptide is A-type ATP synthase subunit D (Saccharolobus islandicus (strain Y.N.15.51 / Yellowstone #2) (Sulfolobus islandicus)).